The chain runs to 229 residues: PKHD-type hydroxylase RPD_3334 (229 aa).

In terms of domain architecture, Fe2OG dioxygenase spans 78 to 180 (QIFPPLFNRY…RVASFFWLQS (103 aa)). Residues histidine 98, aspartate 100, and histidine 161 each coordinate Fe cation. Arginine 171 contributes to the 2-oxoglutarate binding site.

Fe(2+) is required as a cofactor. Requires L-ascorbate as cofactor.

In Rhodopseudomonas palustris (strain BisB5), this protein is PKHD-type hydroxylase RPD_3334.